The primary structure comprises 306 residues: Immune protein Tsi7 (306 aa).

Interacts with Tse7.

Functionally, immunity protein that plays a role in preventing early activation of toxin Tse7. Protects thereby cells from Tse7 DNase activity. The chain is Immune protein Tsi7 from Pseudomonas aeruginosa (strain ATCC 15692 / DSM 22644 / CIP 104116 / JCM 14847 / LMG 12228 / 1C / PRS 101 / PAO1).